The primary structure comprises 432 residues: MSIEVDWRAATSGPDGEALAERIRSFIHDKFQQVALPRFIRSVQVHSFDFGTIPPDLEVKDICEPFADFYEEDEDDETSDVSEELVSGHGTQWHRDLNEPPFHEEMAMNRPLRDPFDEAFHSSTLRSPMEHLNPHFLPRAGTPGIPGGTSTLGYHLMSLGGLSGTQTPLAAVAGGTPFANGWTDPGMGASSRGHPSISGPTAVHPSRMEADIDTSNPTSRPSTSSTLPSHPSASNQPSGDATTGKEHGSLAEDEHLDDPMTSGHPLRLPPRMRERRPEDFQVLCHAKYAGDVRLSLTAEILLDYPMPSFVGLPLKLNVTGITFDGVAVIAYIRKRVHFCFLSAEDADALIGSDQQEARGQDDRPWSSADPTASPKRQGGLLREIRVESEIGRKEDGKQVLKNVGKVERFVLAQVRRIFEEEMVFPSFWTFLI.

An SMP-LTD domain is found at 1–432; the sequence is MSIEVDWRAA…VFPSFWTFLI (432 aa). Disordered stretches follow at residues 182 to 273 and 354 to 377; these read WTDP…PRMR and QQEA…PKRQ. A compositionally biased stretch (low complexity) spans 214–234; it reads TSNPTSRPSTSSTLPSHPSAS. 2 stretches are compositionally biased toward basic and acidic residues: residues 243–253 and 355–364; these read TGKEHGSLAED and QEARGQDDRP.

Belongs to the MDM12 family. As to quaternary structure, component of the ER-mitochondria encounter structure (ERMES) or MDM complex, composed of mmm1, mdm10, mdm12 and mdm34. A mmm1 homodimer associates with one molecule of mdm12 on each side in a pairwise head-to-tail manner, and the SMP-LTD domains of mmm1 and mdm12 generate a continuous hydrophobic tunnel for phospholipid trafficking.

It localises to the mitochondrion outer membrane. It is found in the endoplasmic reticulum membrane. Functionally, component of the ERMES/MDM complex, which serves as a molecular tether to connect the endoplasmic reticulum (ER) and mitochondria. Components of this complex are involved in the control of mitochondrial shape and protein biogenesis, and function in nonvesicular lipid trafficking between the ER and mitochondria. Mdm12 is required for the interaction of the ER-resident membrane protein MMM1 and the outer mitochondrial membrane-resident beta-barrel protein mdm10. The mdm12-mmm1 subcomplex functions in the major beta-barrel assembly pathway that is responsible for biogenesis of all mitochondrial outer membrane beta-barrel proteins, and acts in a late step after the SAM complex. The mdm10-mdm12-mmm1 subcomplex further acts in the TOM40-specific pathway after the action of the mdm12-mmm1 complex. Essential for establishing and maintaining the structure of mitochondria and maintenance of mtDNA nucleoids. The sequence is that of Mitochondrial distribution and morphology protein 12 from Aspergillus flavus (strain ATCC 200026 / FGSC A1120 / IAM 13836 / NRRL 3357 / JCM 12722 / SRRC 167).